The chain runs to 230 residues: MEPSTPPMRGLCTPSTPESPGSFKGVIDASLEGNSSIMIDEIPESDLPAPQVSTFPPTPAKTPKKQLLPNLMLQDRSNSLERCMEEDREHNPFLSSSDNQLLSRKKRKPTPPPSDGLYYVFRGKRIKKSFRPGTDLSTFKPKLLFADSAPSSSSDNPTSSVDLNDYSQIGILPPNLNSIGNKMFSLKSRVPSSSSGSFVAPPPQMRLPAYSSPQKSRSNTKDENRHNLLR.

Disordered stretches follow at residues 1–25 (MEPS…SFKG), 43–118 (PESD…DGLY), and 188–230 (SRVP…NLLR). Position 13 is a phosphothreonine; by MAPK (Thr-13). Ser-19 bears the Phosphoserine; by MAPK mark. Phosphothreonine; by cdc2 occurs at positions 58 and 62. Residues 67–147 (LLPNLMLQDR…TFKPKLLFAD (81 aa)) are CDK inhibitory and cyclin-binding. Over residues 78 to 91 (NSLERCMEEDREHN) the composition is skewed to basic and acidic residues. The segment covering 93 to 102 (FLSSSDNQLL) has biased composition (polar residues). Residues 101 to 230 (LLSRKKRKPT…KDENRHNLLR (130 aa)) form a required for activity as a cdc2 kinase inhibitor region. Low complexity predominate over residues 188–199 (SRVPSSSSGSFV). Residues 219–230 (NTKDENRHNLLR) are compositionally biased toward basic and acidic residues.

In terms of assembly, interacts with cdc13, cig2 and pop1. Phosphorylated by cig1-associated cdc2 which leads to increased stability. Phosphorylation by MAPK reduces cdc2 kinase inhibitor ability.

The protein resides in the nucleus. Functionally, regulator of cell cycle G1 phase progression. Ensures the correct sequence of S phase and mitosis in the cell by acting as an inhibitor of the cdc2 mitotic kinase. Probably interacts with cdc2 to inhibit its action until the cell mass for Start is reached. Determines the length of the pre-Start G1 period and prevents mitosis from happening in early G1 cells. Required for maintaining pheromone-induced G1 arrest. Acts as an adapter protein since interaction with cdc13 promotes cyclin proteolysis during G1. Becomes a target for degradation at the G1/S phase transition, following phosphorylation by cig1-associated cdc2 at the G1/S phase transition. This chain is Cyclin-dependent kinase inhibitor rum1 (rum1), found in Schizosaccharomyces pombe (strain 972 / ATCC 24843) (Fission yeast).